A 152-amino-acid chain; its full sequence is Small ribosomal subunit protein uS13 (152 aa).

It belongs to the universal ribosomal protein uS13 family. As to quaternary structure, part of the 30S ribosomal subunit. Forms a loose heterodimer with protein S19. Forms two bridges to the 50S subunit in the 70S ribosome.

Located at the top of the head of the 30S subunit, it contacts several helices of the 16S rRNA. In the 70S ribosome it contacts the 23S rRNA (bridge B1a) and protein L5 of the 50S subunit (bridge B1b), connecting the 2 subunits; these bridges are implicated in subunit movement. This is Small ribosomal subunit protein uS13 from Pyrobaculum aerophilum (strain ATCC 51768 / DSM 7523 / JCM 9630 / CIP 104966 / NBRC 100827 / IM2).